The following is a 262-amino-acid chain: Thiazole synthase (262 aa).

Lysine 96 serves as the catalytic Schiff-base intermediate with DXP. Residues glycine 157, 184–185 (AG), and 206–207 (NT) each bind 1-deoxy-D-xylulose 5-phosphate.

This sequence belongs to the ThiG family. As to quaternary structure, homotetramer. Forms heterodimers with either ThiH or ThiS.

The protein localises to the cytoplasm. It carries out the reaction [ThiS sulfur-carrier protein]-C-terminal-Gly-aminoethanethioate + 2-iminoacetate + 1-deoxy-D-xylulose 5-phosphate = [ThiS sulfur-carrier protein]-C-terminal Gly-Gly + 2-[(2R,5Z)-2-carboxy-4-methylthiazol-5(2H)-ylidene]ethyl phosphate + 2 H2O + H(+). It functions in the pathway cofactor biosynthesis; thiamine diphosphate biosynthesis. In terms of biological role, catalyzes the rearrangement of 1-deoxy-D-xylulose 5-phosphate (DXP) to produce the thiazole phosphate moiety of thiamine. Sulfur is provided by the thiocarboxylate moiety of the carrier protein ThiS. In vitro, sulfur can be provided by H(2)S. This chain is Thiazole synthase, found in Legionella pneumophila (strain Paris).